The chain runs to 336 residues: Ketol-acid reductoisomerase (NADP(+)) 1 (336 aa).

In terms of domain architecture, KARI N-terminal Rossmann spans 2–181 (AKVYYEKDVT…GATRAGVLET (180 aa)). NADP(+) is bound by residues 25–28 (YGSQ), Arg-48, Ser-52, and 82–85 (DELQ). Residue His-107 is part of the active site. An NADP(+)-binding site is contributed by Gly-133. In terms of domain architecture, KARI C-terminal knotted spans 182–327 (TFKEETETDL…RKLREMMPFV (146 aa)). Positions 190, 194, 226, and 230 each coordinate Mg(2+). Position 251 (Ser-251) interacts with substrate.

It belongs to the ketol-acid reductoisomerase family. Requires Mg(2+) as cofactor.

It catalyses the reaction (2R)-2,3-dihydroxy-3-methylbutanoate + NADP(+) = (2S)-2-acetolactate + NADPH + H(+). The catalysed reaction is (2R,3R)-2,3-dihydroxy-3-methylpentanoate + NADP(+) = (S)-2-ethyl-2-hydroxy-3-oxobutanoate + NADPH + H(+). It functions in the pathway amino-acid biosynthesis; L-isoleucine biosynthesis; L-isoleucine from 2-oxobutanoate: step 2/4. Its pathway is amino-acid biosynthesis; L-valine biosynthesis; L-valine from pyruvate: step 2/4. Functionally, involved in the biosynthesis of branched-chain amino acids (BCAA). Catalyzes an alkyl-migration followed by a ketol-acid reduction of (S)-2-acetolactate (S2AL) to yield (R)-2,3-dihydroxy-isovalerate. In the isomerase reaction, S2AL is rearranged via a Mg-dependent methyl migration to produce 3-hydroxy-3-methyl-2-ketobutyrate (HMKB). In the reductase reaction, this 2-ketoacid undergoes a metal-dependent reduction by NADPH to yield (R)-2,3-dihydroxy-isovalerate. This chain is Ketol-acid reductoisomerase (NADP(+)) 1, found in Bacillus cereus (strain ATCC 14579 / DSM 31 / CCUG 7414 / JCM 2152 / NBRC 15305 / NCIMB 9373 / NCTC 2599 / NRRL B-3711).